The following is a 483-amino-acid chain: Probable 4-aminobutyrate aminotransferase, mitochondrial (483 aa).

Position 148-149 (148-149 (GT)) interacts with pyridoxal 5'-phosphate. Residue arginine 204 participates in substrate binding. The residue at position 341 (lysine 341) is an N6-(pyridoxal phosphate)lysine. Residue threonine 365 participates in pyridoxal 5'-phosphate binding.

It belongs to the class-III pyridoxal-phosphate-dependent aminotransferase family. Homodimer. Requires pyridoxal 5'-phosphate as cofactor.

The protein localises to the mitochondrion matrix. It catalyses the reaction 4-aminobutanoate + 2-oxoglutarate = succinate semialdehyde + L-glutamate. The enzyme catalyses (S)-3-amino-2-methylpropanoate + 2-oxoglutarate = 2-methyl-3-oxopropanoate + L-glutamate. This Caenorhabditis elegans protein is Probable 4-aminobutyrate aminotransferase, mitochondrial (gta-1).